Consider the following 203-residue polypeptide: Phospho-2-dehydro-3-deoxyheptonate aldolase (203 aa).

Residues 1 to 10 show a composition bias toward basic and acidic residues; sequence MIDRLVRDSR. Residues 1–28 form a disordered region; that stretch reads MIDRLVRDSRGPVTERNPPHMSLSAGPA.

The protein belongs to the class-I DAHP synthase family.

It carries out the reaction D-erythrose 4-phosphate + phosphoenolpyruvate + H2O = 7-phospho-2-dehydro-3-deoxy-D-arabino-heptonate + phosphate. The protein operates within metabolic intermediate biosynthesis; chorismate biosynthesis; chorismate from D-erythrose 4-phosphate and phosphoenolpyruvate: step 1/7. In terms of biological role, stereospecific condensation of phosphoenolpyruvate (PEP) and D-erythrose-4-phosphate (E4P) giving rise to 3-deoxy-D-arabino-heptulosonate-7-phosphate (DAHP). The polypeptide is Phospho-2-dehydro-3-deoxyheptonate aldolase (aroA) (Amycolatopsis methanolica).